The primary structure comprises 444 residues: ATPase PAAT (444 aa).

Serine 177, serine 182, and serine 254 each carry phosphoserine. Residues 279–300 form a disordered region; sequence SAQPSGEGNTTNHDEGHLMPQN. Residues 280-289 are compositionally biased toward polar residues; the sequence is AQPSGEGNTT. Serine 302 is modified (phosphoserine). The interval 424–444 is disordered; it reads PPPGMPLRHYDSRERLSNGER. The span at 431-444 shows a compositional bias: basic and acidic residues; sequence RHYDSRERLSNGER.

As to quaternary structure, homodimer. Interacts with ABCB7, ABCB8/MITOSUR and ABCB10.

The protein resides in the cytoplasm. It is found in the mitochondrion. The catalysed reaction is ATP + H2O = ADP + phosphate + H(+). In terms of biological role, ATPase that regulates mitochondrial ABC transporters ABCB7, ABCB8/MITOSUR and ABCB10. Regulates mitochondrial ferric concentration and heme biosynthesis and plays a role in the maintenance of mitochondrial homeostasis and cell survival. The protein is ATPase PAAT of Mus musculus (Mouse).